The sequence spans 1545 residues: Tricalbin-3 (1545 aa).

The interval 1 to 89 (MTGIKAQVHP…SNPEGKKQSS (89 aa)) is disordered. The Cytoplasmic portion of the chain corresponds to 1–206 (MTGIKAQVHP…AYILENFYND (206 aa)). Positions 62–80 (TKTSNSVSDVSKGQKTADS) are enriched in polar residues. Phosphoserine occurs at positions 67 and 112. The helical transmembrane segment at 207–227 (WYCNIATVLGTCFFSWLFAYI) threads the bilayer. Residue Gly228 is a topological domain, extracellular. The chain crosses the membrane as a helical span at residues 229–249 (FSWWSMIFIFLGTATVYNAEY). The Cytoplasmic segment spans residues 250–1545 (TRFNRNIRDD…VPEVPQEYTQ (1296 aa)). The region spanning 272 to 479 (RVESTTWLNS…PPNHLDINVE (208 aa)) is the SMP-LTD domain. Positions 470–596 (PPNHLDINVE…LQNPVLDNQT (127 aa)) constitute a C2 1 domain. A coiled-coil region spans residues 620 to 660 (EDKSEEKAVERAEAKAKGKKEDENEDTTEKEEDENEESSQT). Positions 624-641 (EEKAVERAEAKAKGKKED) are enriched in basic and acidic residues. The interval 624 to 660 (EEKAVERAEAKAKGKKEDENEDTTEKEEDENEESSQT) is disordered. A compositionally biased stretch (acidic residues) spans 642 to 658 (ENEDTTEKEEDENEESS). C2 domains are found at residues 646–763 (TTEK…AQEF) and 783–897 (MTGA…SGKY). The stretch at 937–972 (SPEELVNVEKLEKELKEKKKKFEATQEENEQEMEKN) forms a coiled coil. Positions 1119-1234 (PTSVKLPSSE…EVGKTYNWNL (116 aa)) constitute a C2 4 domain. Asp1150, Asp1156, Asp1204, Asp1206, and Asp1212 together coordinate Ca(2+). Positions 1304 to 1404 (LLKSLGGNPM…NSRGHSRASS (101 aa)) are disordered. The segment covering 1318 to 1328 (SSNGNESNGAK) has biased composition (polar residues). Basic and acidic residues predominate over residues 1329–1340 (KSSEKKSFDRRS). Phosphoserine occurs at positions 1340, 1342, and 1346. Over residues 1341–1351 (PSNLNSTSVTP) the composition is skewed to polar residues. Thr1350 bears the Phosphothreonine mark. Ser1354 is subject to Phosphoserine. Residues 1361-1373 (VPNTSYAPVQSAS) show a composition bias toward polar residues. Low complexity predominate over residues 1377–1404 (KPTDNTSSSSNKKDTPSSNSRGHSRASS). The region spanning 1396–1514 (SRGHSRASSF…QQDGQISVKL (119 aa)) is the C2 5 domain. Ser1400 carries the phosphoserine modification.

This sequence belongs to the tricalbin family. As to quaternary structure, interacts with TCB2 via its C-terminal domain. It depends on Ca(2+) as a cofactor.

The protein resides in the cell membrane. The protein localises to the endoplasmic reticulum membrane. Its function is as follows. May play a role in membrane trafficking. This chain is Tricalbin-3 (TCB3), found in Saccharomyces cerevisiae (strain ATCC 204508 / S288c) (Baker's yeast).